The sequence spans 250 residues: NAD(P)H-quinone oxidoreductase subunit K (250 aa).

Residues Cys-63, Cys-64, Cys-128, and Cys-159 each contribute to the [4Fe-4S] cluster site.

It belongs to the complex I 20 kDa subunit family. In terms of assembly, NDH-1 can be composed of about 15 different subunits; different subcomplexes with different compositions have been identified which probably have different functions. It depends on [4Fe-4S] cluster as a cofactor.

It is found in the cellular thylakoid membrane. It catalyses the reaction a plastoquinone + NADH + (n+1) H(+)(in) = a plastoquinol + NAD(+) + n H(+)(out). The catalysed reaction is a plastoquinone + NADPH + (n+1) H(+)(in) = a plastoquinol + NADP(+) + n H(+)(out). In terms of biological role, NDH-1 shuttles electrons from an unknown electron donor, via FMN and iron-sulfur (Fe-S) centers, to quinones in the respiratory and/or the photosynthetic chain. The immediate electron acceptor for the enzyme in this species is believed to be plastoquinone. Couples the redox reaction to proton translocation, and thus conserves the redox energy in a proton gradient. Cyanobacterial NDH-1 also plays a role in inorganic carbon-concentration. The sequence is that of NAD(P)H-quinone oxidoreductase subunit K from Rippkaea orientalis (strain PCC 8801 / RF-1) (Cyanothece sp. (strain PCC 8801)).